The chain runs to 2564 residues: Spectrin beta chain, non-erythrocytic 4 (2564 aa).

Positions 1–37 (MAQVPGEVDNMEGLPAPNNNPAARWESPDRGWEREQP) are disordered. The tract at residues 1-282 (MAQVPGEVDN…IITYVVSFYH (282 aa)) is actin-binding. Basic and acidic residues predominate over residues 26 to 36 (ESPDRGWEREQ). 2 Calponin-homology (CH) domains span residues 61–165 (AVQK…LRFQ) and 180–285 (RSAK…HYFS). 14 Spectrin repeats span residues 311-418 (IERY…AALR), 430-533 (LAQR…RLEQ), 536-641 (ALQK…AELE), 774-879 (ALHQ…WLRD), 884-982 (YRMF…RKEE), 1089-1196 (RLQR…EALV), 1306-1407 (ELQH…RQLF), 1412-1512 (ADQL…RLLL), 1515-1617 (KELH…QQVL), 1623-1725 (VEQY…ALEQ), 1728-1830 (WLYQ…AQLL), 1835-1935 (ELHK…EDAR), 1944-2046 (ALRF…WLQQ), and 2049-2123 (EVHQ…QSKQ). Residues 1853 to 1872 (KRRRLPRLTTPPEPRPSASS) are disordered. A compositionally biased stretch (low complexity) spans 2208–2225 (PAAPEDAAETPATPAAAE). Disordered regions lie at residues 2208–2439 (PAAP…KSSN) and 2533–2564 (ARWGQTLPTTSSTDEGNPKREGGDRRASGRRK). Basic and acidic residues-rich tracts occupy residues 2227 to 2254 (VRPRPERQESADRAEELPRRRRPERQES), 2268 to 2278 (ERQESAEHEAA), and 2287 to 2318 (EQMERRRERRERRLERQESSEQEMPIRGDLVK). Positions 2343-2355 (PSLPQPRELPPGR) are enriched in pro residues. Composition is skewed to basic and acidic residues over residues 2362–2377 (LPERTPRPDRPRARDR) and 2424–2435 (FLLRKRELDANR). Residues 2418–2527 (TVQHEGFLLR…WLEAVASSVA (110 aa)) enclose the PH domain. The span at 2538 to 2547 (TLPTTSSTDE) shows a compositional bias: polar residues. Residues 2548–2564 (GNPKREGGDRRASGRRK) show a composition bias toward basic and acidic residues.

This sequence belongs to the spectrin family. Expressed in skeletal muscle at the sarcolemma and in the muscle capillaries (at protein level). Abundantly expressed in brain and pancreatic islets.

The protein localises to the cytoplasm. Its subcellular location is the cytoskeleton. It is found in the cell cortex. The protein is Spectrin beta chain, non-erythrocytic 4 (SPTBN4) of Homo sapiens (Human).